The primary structure comprises 157 residues: MPRKGPVKKREILPDPVYNDKVVAKLINKVMYDGKKSIAQKIVYGAFDIVREKTGKDPLEVLEAALNNVMPVLEVRPRRVGGATYQIPIEVSPDRRLSLGIRWLVEYARERKDKRTMKEKLAAEIMDAANNTGGAVKKKEDTHRMAEANRAFAHYRW.

Belongs to the universal ribosomal protein uS7 family. In terms of assembly, part of the 30S ribosomal subunit. Contacts proteins S9 and S11.

One of the primary rRNA binding proteins, it binds directly to 16S rRNA where it nucleates assembly of the head domain of the 30S subunit. Is located at the subunit interface close to the decoding center, probably blocks exit of the E-site tRNA. This chain is Small ribosomal subunit protein uS7, found in Caldicellulosiruptor saccharolyticus (strain ATCC 43494 / DSM 8903 / Tp8T 6331).